We begin with the raw amino-acid sequence, 264 residues long: Thymidylate synthase (264 aa).

Position 21 (arginine 21) interacts with dUMP. Residue histidine 51 participates in (6R)-5,10-methylene-5,6,7,8-tetrahydrofolate binding. Arginine 126–arginine 127 lines the dUMP pocket. Cysteine 146 functions as the Nucleophile in the catalytic mechanism. Residues arginine 166–aspartate 169, asparagine 177, and histidine 207–tyrosine 209 each bind dUMP. A (6R)-5,10-methylene-5,6,7,8-tetrahydrofolate-binding site is contributed by aspartate 169. Residue alanine 263 participates in (6R)-5,10-methylene-5,6,7,8-tetrahydrofolate binding.

Belongs to the thymidylate synthase family. Bacterial-type ThyA subfamily. Homodimer.

It is found in the cytoplasm. The catalysed reaction is dUMP + (6R)-5,10-methylene-5,6,7,8-tetrahydrofolate = 7,8-dihydrofolate + dTMP. It functions in the pathway pyrimidine metabolism; dTTP biosynthesis. Its function is as follows. Catalyzes the reductive methylation of 2'-deoxyuridine-5'-monophosphate (dUMP) to 2'-deoxythymidine-5'-monophosphate (dTMP) while utilizing 5,10-methylenetetrahydrofolate (mTHF) as the methyl donor and reductant in the reaction, yielding dihydrofolate (DHF) as a by-product. This enzymatic reaction provides an intracellular de novo source of dTMP, an essential precursor for DNA biosynthesis. In Buchnera aphidicola subsp. Baizongia pistaciae (strain Bp), this protein is Thymidylate synthase.